A 423-amino-acid polypeptide reads, in one-letter code: Putative protein phosphatase 2C 50 (423 aa).

The PPM-type phosphatase domain maps to 52–380 (IFAFPFPTGT…DNMAAVVVPL (329 aa)). Residues D74, G75, D320, and D371 each coordinate Mn(2+).

It belongs to the PP2C family. Mg(2+) serves as cofactor. It depends on Mn(2+) as a cofactor.

The enzyme catalyses O-phospho-L-seryl-[protein] + H2O = L-seryl-[protein] + phosphate. It carries out the reaction O-phospho-L-threonyl-[protein] + H2O = L-threonyl-[protein] + phosphate. This Arabidopsis thaliana (Mouse-ear cress) protein is Putative protein phosphatase 2C 50.